Here is a 488-residue protein sequence, read N- to C-terminus: Glutamyl-tRNA(Gln) amidotransferase subunit A (488 aa).

Active-site charge relay system residues include lysine 79 and serine 159. Residue serine 183 is the Acyl-ester intermediate of the active site.

The protein belongs to the amidase family. GatA subfamily. Heterotrimer of A, B and C subunits.

It carries out the reaction L-glutamyl-tRNA(Gln) + L-glutamine + ATP + H2O = L-glutaminyl-tRNA(Gln) + L-glutamate + ADP + phosphate + H(+). Its function is as follows. Allows the formation of correctly charged Gln-tRNA(Gln) through the transamidation of misacylated Glu-tRNA(Gln) in organisms which lack glutaminyl-tRNA synthetase. The reaction takes place in the presence of glutamine and ATP through an activated gamma-phospho-Glu-tRNA(Gln). The chain is Glutamyl-tRNA(Gln) amidotransferase subunit A from Wolbachia pipientis subsp. Culex pipiens (strain wPip).